Consider the following 93-residue polypeptide: Exodeoxyribonuclease 7 small subunit (93 aa).

A compositionally biased stretch (low complexity) spans 1–17 (MAKSSASSLSSAKPVAA). The tract at residues 1 to 22 (MAKSSASSLSSAKPVAAGPDAS) is disordered.

It belongs to the XseB family. As to quaternary structure, heterooligomer composed of large and small subunits.

The protein localises to the cytoplasm. The enzyme catalyses Exonucleolytic cleavage in either 5'- to 3'- or 3'- to 5'-direction to yield nucleoside 5'-phosphates.. Bidirectionally degrades single-stranded DNA into large acid-insoluble oligonucleotides, which are then degraded further into small acid-soluble oligonucleotides. This Polaromonas naphthalenivorans (strain CJ2) protein is Exodeoxyribonuclease 7 small subunit.